The primary structure comprises 255 residues: Electron transfer flavoprotein subunit beta (255 aa).

Ala-2 is subject to N-acetylalanine. AMP is bound by residues Ala-9, Asn-39–Cys-42, Cys-66, and Gly-123–Thr-134. The segment at Ala-183–Lys-205 is recognition loop. An N6,N6,N6-trimethyllysine; by ETFBKMT; alternate modification is found at Lys-200. Position 200 is an N6-acetyllysine; alternate (Lys-200). Residue Lys-200 is modified to N6-methyllysine; alternate. Residue Lys-203 is modified to N6,N6,N6-trimethyllysine; by ETFBKMT. Lys-210 is subject to N6-acetyllysine; alternate. Lys-210 is subject to N6-succinyllysine; alternate. Phosphoserine is present on residues Ser-223 and Ser-226. Lys-238 is subject to N6-acetyllysine. Position 248 is an N6-acetyllysine; alternate (Lys-248). Position 248 is an N6-succinyllysine; alternate (Lys-248).

Belongs to the ETF beta-subunit/FixA family. In terms of assembly, heterodimer composed of ETFA and ETFB. Identified in a complex that contains ETFA, ETFB and ETFRF1. Interacts with ACADM. Post-translationally, methylated. Trimethylation at Lys-200 and Lys-203 may negatively regulate the activity in electron transfer from acyl-CoA dehydrogenases.

It localises to the mitochondrion matrix. Functionally, heterodimeric electron transfer flavoprotein that accepts electrons from several mitochondrial dehydrogenases, including acyl-CoA dehydrogenases, glutaryl-CoA and sarcosine dehydrogenase. It transfers the electrons to the main mitochondrial respiratory chain via ETF-ubiquinone oxidoreductase. Required for normal mitochondrial fatty acid oxidation and normal amino acid metabolism. ETFB binds an AMP molecule that probably has a purely structural role. This Sus scrofa (Pig) protein is Electron transfer flavoprotein subunit beta.